A 31-amino-acid chain; its full sequence is Cytochrome b6-f complex subunit 6 (31 aa).

Residues 4–24 (LTSYFGFLLAALTITPALFIG) form a helical membrane-spanning segment.

The protein belongs to the PetL family. The 4 large subunits of the cytochrome b6-f complex are cytochrome b6, subunit IV (17 kDa polypeptide, PetD), cytochrome f and the Rieske protein, while the 4 small subunits are PetG, PetL, PetM and PetN. The complex functions as a dimer.

Its subcellular location is the plastid. It localises to the chloroplast thylakoid membrane. In terms of biological role, component of the cytochrome b6-f complex, which mediates electron transfer between photosystem II (PSII) and photosystem I (PSI), cyclic electron flow around PSI, and state transitions. PetL is important for photoautotrophic growth as well as for electron transfer efficiency and stability of the cytochrome b6-f complex. The polypeptide is Cytochrome b6-f complex subunit 6 (Agrostis stolonifera (Creeping bentgrass)).